A 95-amino-acid polypeptide reads, in one-letter code: PIK3R3 upstream open reading frame protein (95 aa).

A disordered region spans residues 1-27 (MGPSRLVRGPRPQGMRSPYRRPGMGWP).

In Homo sapiens (Human), this protein is PIK3R3 upstream open reading frame protein.